A 545-amino-acid chain; its full sequence is Mitogen-activated protein kinase kinase kinase mom-4 (545 aa).

The span at 1–21 (MDTSPHSKPSSSSASQSSHSP) shows a compositional bias: low complexity. The tract at residues 1 to 35 (MDTSPHSKPSSSSASQSSHSPSPAPVTAPRKTRDS) is disordered. The region spanning 53 to 308 (NLNSHQLGRG…AECLQYFTAL (256 aa)) is the Protein kinase domain. ATP contacts are provided by residues 59-67 (LGRGTYGIV) and K86. Catalysis depends on D178, which acts as the Proton acceptor. Positions 316–444 (NVPLADANTN…PIDDRRDSNE (129 aa)) are disordered. Polar residues-rich tracts occupy residues 352-369 (NGRTPTASNHLNAPQAVN) and 396-411 (ASSSGAFRGPRSQSEA).

Belongs to the protein kinase superfamily. STE Ser/Thr protein kinase family. MAP kinase kinase kinase subfamily. As to quaternary structure, interacts with, and is activated by, tap-1. Requires Mg(2+) as cofactor.

The catalysed reaction is L-seryl-[protein] + ATP = O-phospho-L-seryl-[protein] + ADP + H(+). It catalyses the reaction L-threonyl-[protein] + ATP = O-phospho-L-threonyl-[protein] + ADP + H(+). In terms of biological role, part of the Wnt signaling pathway essential for the specification of the mesodermal cell fate in early embryos. Stimulates the wrm-1/lit-1-dependent phosphorylation of pop-1 and plays a role in the initial nuclear accumulation of wrm-1. This is Mitogen-activated protein kinase kinase kinase mom-4 from Caenorhabditis briggsae.